Consider the following 421-residue polypeptide: UDP-N-acetylglucosamine 1-carboxyvinyltransferase (421 aa).

Residue 22-23 (KN) coordinates phosphoenolpyruvate. Position 93 (R93) interacts with UDP-N-acetyl-alpha-D-glucosamine. The active-site Proton donor is the C117. C117 is subject to 2-(S-cysteinyl)pyruvic acid O-phosphothioketal. Residues 122–126 (RPVDL), D308, and L330 contribute to the UDP-N-acetyl-alpha-D-glucosamine site.

It belongs to the EPSP synthase family. MurA subfamily.

Its subcellular location is the cytoplasm. The catalysed reaction is phosphoenolpyruvate + UDP-N-acetyl-alpha-D-glucosamine = UDP-N-acetyl-3-O-(1-carboxyvinyl)-alpha-D-glucosamine + phosphate. It participates in cell wall biogenesis; peptidoglycan biosynthesis. In terms of biological role, cell wall formation. Adds enolpyruvyl to UDP-N-acetylglucosamine. In Helicobacter hepaticus (strain ATCC 51449 / 3B1), this protein is UDP-N-acetylglucosamine 1-carboxyvinyltransferase.